Consider the following 137-residue polypeptide: Fluoride-specific ion channel FluC 1 (137 aa).

The next 4 helical transmembrane spans lie at 3 to 23, 42 to 62, 69 to 89, and 107 to 127; these read PLVV…RLVL, INVT…GHGL, ILGT…YEAV, and MMFL…LAVA. Glycine 76 and threonine 79 together coordinate Na(+).

This sequence belongs to the fluoride channel Fluc/FEX (TC 1.A.43) family.

The protein resides in the cell membrane. The enzyme catalyses fluoride(in) = fluoride(out). With respect to regulation, na(+) is not transported, but it plays an essential structural role and its presence is essential for fluoride channel function. In terms of biological role, fluoride-specific ion channel. Important for reducing fluoride concentration in the cell, thus reducing its toxicity. The sequence is that of Fluoride-specific ion channel FluC 1 from Leifsonia xyli subsp. xyli (strain CTCB07).